The chain runs to 239 residues: Carboxy-S-adenosyl-L-methionine synthase (239 aa).

Residues Tyr35, 64-66 (GCS), 88-89 (DN), and Arg195 contribute to the S-adenosyl-L-methionine site.

The protein belongs to the class I-like SAM-binding methyltransferase superfamily. Cx-SAM synthase family. In terms of assembly, homodimer.

It catalyses the reaction prephenate + S-adenosyl-L-methionine = carboxy-S-adenosyl-L-methionine + 3-phenylpyruvate + H2O. Its function is as follows. Catalyzes the conversion of S-adenosyl-L-methionine (SAM) to carboxy-S-adenosyl-L-methionine (Cx-SAM). The chain is Carboxy-S-adenosyl-L-methionine synthase from Helicobacter pylori (strain Shi470).